Consider the following 313-residue polypeptide: UbiA prenyltransferase claS (313 aa).

Transmembrane regions (helical) follow at residues 30–52 (FAGT…RALL) and 57–79 (TFGT…GCIW). The short motif at 81–88 (DILDQDFD) is the NDxxDxxxD element. Positions 84 and 88 each coordinate Mg(2+). Helical transmembrane passes span 99 to 121 (IASG…FILM), 131 to 148 (AWMI…IYPL), and 155 to 177 (WPQA…YTTG). Mg(2+) contacts are provided by aspartate 205 and aspartate 209. The short motif at 205–209 (DKKDD) is the DxxxD element. Positions 205–209 (DKKDD) match the YxxxK motif. A run of 3 helical transmembrane segments spans residues 227–247 (PVLS…GILN), 250–270 (ELPY…TQLW), and 293–313 (AIVW…GAIM).

It belongs to the UbiA prenyltransferase family. The cofactor is Mg(2+).

The protein localises to the membrane. The enzyme catalyses hydroquinone + (2E)-geranyl diphosphate = (2E)-geranylhydroquinone + diphosphate. It participates in secondary metabolite biosynthesis; terpenoid biosynthesis. Functionally, prenyltransferase; part of the gene cluster that mediates the biosynthesis of clavilactone A, a meroterpenoid that features a unique benzo-fused ten-membered carbocyclic ring unit with an alpha,beta-epoxy-gamma-lactone moiety, forming an intriguing 10/5/3 tricyclic nested skeleton. ClaR, ClaS and ClaT are sufficient to produce clavilactone A. Within the pathway, claS acts as an atypical UbiA prenyltransferase that transfers geranyl pyrophosphate (GPP) to hydroquinone (HYQ) instead of p-hydroxybenzoic acid (PHB), producing the first intermediate geranylhydroquinone. The cytochrome P450 monooxygenase claR then catalyzes the diradical coupling reaction between the intramolecular hydroquinone and allyl moieties to form the benzo-fused ten-membered carbocyclic ring unit of wigantol. Finally the cytochrome P450 monooxygenase claT exquisitely and stereoselectively assembles the alpha,beta-epoxy-gamma-lactone moiety, producing clavilactone A via arnebinol A. This is UbiA prenyltransferase claS from Ampulloclitocybe clavipes (Club foot).